We begin with the raw amino-acid sequence, 516 residues long: Cytochrome P450 monooxygenase lcsI (516 aa).

Residues isoleucine 20–leucine 42 traverse the membrane as a helical segment. N-linked (GlcNAc...) asparagine glycans are attached at residues asparagine 131, asparagine 184, asparagine 415, asparagine 420, and asparagine 442. Cysteine 456 is a heme binding site.

Belongs to the cytochrome P450 family. The cofactor is heme.

It localises to the membrane. It participates in secondary metabolite biosynthesis. Functionally, cytochrome P450 monooxygenase; part of the gene cluster that mediates the biosynthesis of the lipopeptide antibiotics leucinostatins that show extensive biological activities, including antimalarial, antiviral, antibacterial, antifungal, and antitumor activities, as well as phytotoxic. Leucinostatin A contains nine amino acid residues, including the unusual amino acid 4-methyl-L-proline (MePro), 2-amino-6-hydroxy-4-methyl-8-oxodecanoic acid (AHyMeOA), 3-hydroxyleucine (HyLeu), alpha-aminoisobutyric acid (AIB), beta-Ala, a 4-methylhex-2-enoic acid at the N-terminus as well as a N1,N1-dimethylpropane-1,2-diamine (DPD) at the C-terminus. The biosynthesis of leucinostatins is probably initiated with the assembly of 4-methylhex-2-enoic acid by a reducing PKS. Two reducing polyketide synthases, lcsB and lcsC, have been identified in the cluster and it is not clear which is the one that assembles 4-methylhex-2-enoic acid since both contain KS, AT, DH, cMT, ER, KR and ACP domains. The polyketide residue might be transferred to the NRPS lcsA, mediated by two additional enzymes, the acyl-CoA ligase lcsD and the thioesterase lcsE. The linear polyketide carboxylic acid, which is released from PKS, is converted to a CoA thioester by lcsD, and then lcsE hydrolyzes the thiol bond and shuttles the polyketide intermediate to lcsA. The C domain of the first module catalyzed the condensation of 4-methylhex-2-enoic acid and MePro carried by domain A1, followed by successive condensations of nine amino acids to trigger the elongation of the linear peptide. A5 and A6 domains of lcsA are proposed to incorporate leucine, A2 AHyMeOA, and A3 incorporates HyLeu. A4, A7 and A8 incorporate AIB. The AHyMeOA in leucinostatin A activated by the A2 might be produced by the second PKS (lcsB or lcsC) present within the cluster. The MePro is probably produced via leucine cyclization and may originate from a separate pathway, independent of the cluster. Another nonproteinogenic amino acid, beta-Ala, could be produced by an aspartic acid decarboxylase also localized outside of the cluster. Two candidates are VFPBJ_01400 and VFPBJ_10476. The final peptide scaffold may be released by the NAD(P)H-dependent thioester reductase (TE) at the C-terminal region of lcsA. Transamination of the lcsA product by the transaminase lcsP may produce DPD at the C-terminus. Further hydroxylation steps performed alternatively by the cytochrome P450 monooxygenases lcsI, lcsK and lcsN then yield the non-methylated leucinostatins precursor. It is also possible that leucines can be hydroxylated prior to their incorporation into the peptide. Varying extents of methylation then lead to the formation of leucinostatins A and B. This is Cytochrome P450 monooxygenase lcsI from Purpureocillium lilacinum (Paecilomyces lilacinus).